A 268-amino-acid polypeptide reads, in one-letter code: Microtubule-associated protein RP/EB family member 1 (268 aa).

N-acetylalanine is present on Ala2. Residues 14-116 form the Calponin-homology (CH) domain; the sequence is NLSRHDMLAW…FVQWFKKFFD (103 aa). Residue Lys66 is modified to N6-crotonyllysine. Tyr124 carries the post-translational modification Phosphotyrosine. Residues 124–268 form an interaction with MTUS2/TIP150 region; the sequence is YDPVAARQGQ…GGPQEEQEEY (145 aa). The interval 146 to 180 is disordered; that stretch reads LSKPKKPLGSSTAAPQRPIATQRTTAAPKAGPGMV. A compositionally biased stretch (polar residues) spans 154-170; the sequence is GSSTAAPQRPIATQRTT. Phosphoserine is present on Ser155. An EB1 C-terminal domain is found at 185–255; it reads GVGNGDDEAA…LYATDEGFVI (71 aa). Positions 206–211 are interaction with APC; sequence TVEDLE. Positions 208-268 are DCTN1-binding; it reads EDLEKERDFY…GGPQEEQEEY (61 aa). Lys220 carries the post-translational modification N6-acetyllysine. Positions 220-242 are APC-binding; it reads KLRNIELICQENEGENDPVLQRI. The tract at residues 232 to 255 is interaction with SKA1; it reads EGENDPVLQRIVDILYATDEGFVI.

Belongs to the MAPRE family. As to quaternary structure, homodimer. Heterodimer with MAPRE3. Interacts (via C-terminal residues 206-211) with APC (via C-terminal residues 2674-2845); the interaction inhibits association with and bundling of F-actin. Interacts with DCTN1, DIAPH1 and DIAPH2. Interacts with DCTN2, TERF1 and dynein intermediate chain. Interacts with CLASP2, DST, KIF2C and STIM1; probably required for their targeting to the growing microtubule plus ends. Interacts with MTUS2; interaction is direct and probably targets MTUS2 to microtubules. Interacts (via C-terminus) with SKA1 (via SXIP motif); the interaction is direct and stabilizes the kinetochore-microtubule attachment of the SKA1 complex. Interacts with APC2. Interacts with CLASP1. Interacts (via C-terminus) with CLIP1. Interacts with SLAIN2 and SLAIN1. Interacts with MACF1. Interacts with KIF18B; this interaction is required for efficient accumulation of KIF18B at microtubule plus ends. Interacts with MISP. Interacts with RABL2/RABL2A; binds preferentially to GTP-bound RABL2. Interacts with KCNAB2. Interacts with KNSTRN. Interacts with NCKAP5L. Interacts with AKAP9. Interacts with PDE4DIP isoform 2/MMG8/SMYLE; this interaction is required for its recruitment to the Golgi apparatus. May form a pericentrosomal complex with AKAP9, CDK5RAP2 and PDE4DIP isoform 2/MMG8/SMYLE; within this complex, MAPRE1 binding to CDK5RAP2 may be mediated by PDE4DIP. Contrary to other mammalian species, does not interact with CDK5RAP2, possibly due to the lack of conservation of the MAPRE1-binding motif in mouse CDK5RAP2. Interacts with AKNA. Interacts with GAS2L1, GAS2L2, and GAS2L3. Interacts with RARRES1 and AGBL2. In terms of processing, acetylation at Lys-220 by KAT2B/PCAF promotes dynamic kinetochore-microtubule interactions in early mitosis. Crotonylated by KAT5 during mitosis, promoting astral microtubule plasticity and dynamic connection between astral microtubules and the cortex during mitotic chromosome segregation, thereby ensuring accurate spindle positioning in mitosis. Decrotonylated by HDAC3. In terms of tissue distribution, expressed within the midpiece of sperm tail (at protein level).

The protein resides in the cytoplasm. It is found in the cytoskeleton. The protein localises to the microtubule organizing center. Its subcellular location is the centrosome. It localises to the spindle. The protein resides in the spindle pole. Its function is as follows. Plus-end tracking protein (+TIP) that binds to the plus-end of microtubules and regulates the dynamics of the microtubule cytoskeleton. Recruits other +TIP proteins to microtubules by binding to a conserved Ser-X-Leu-Pro (SXLP) motif in their polypeptide chains. Promotes cytoplasmic microtubule nucleation and elongation. Involved in mitotic spindle positioning by stabilizing microtubules and promoting dynamic connection between astral microtubules and the cortex during mitotic chromosome segregation. Assists chromosome alignment in metaphase by recruiting the SKA complex to the spindle and stabilizing its interactions with microtubule bundles (K-fibers). Also acts as a regulator of minus-end microtubule organization: interacts with the complex formed by AKAP9 and PDE4DIP, leading to recruit CAMSAP2 to the Golgi apparatus, thereby tethering non-centrosomal minus-end microtubules to the Golgi, an important step for polarized cell movement. Promotes elongation of CAMSAP2-decorated microtubule stretches on the minus-end of microtubules. Acts as a regulator of autophagosome transport via interaction with CAMSAP2. Functions downstream of Rho GTPases and DIAPH1 in stable microtubule formation. May play a role in cell migration. This is Microtubule-associated protein RP/EB family member 1 (Mapre1) from Mus musculus (Mouse).